A 1149-amino-acid polypeptide reads, in one-letter code: Nitric oxide synthase, inducible (1149 aa).

The interval 22 to 83 is disordered; it reads KDINNNVGKA…HKPSPTCSQH (62 aa). Residues 23-27 carry the DINNN-motif; mediates interaction with SPSB1, SPSB2 and SPSB4 motif; it reads DINNN. Residues 50-61 show a composition bias toward polar residues; the sequence is KHQNGSSQSLTG. Residues Cys-109 and Cys-114 each contribute to the Zn(2+) site. Residue Ser-117 coordinates (6R)-L-erythro-5,6,7,8-tetrahydrobiopterin. Cys-199 is a heme b binding site. Gln-262, Trp-371, Tyr-372, and Glu-376 together coordinate L-arginine. Positions 380, 461, 462, and 475 each coordinate (6R)-L-erythro-5,6,7,8-tetrahydrobiopterin. Position 490 (Tyr-490) interacts with heme b. The tract at residues 514–534 is calmodulin-binding; sequence FRVLAKATLFASLLMRKMMAS. Residues 538-676 form the Flavodoxin-like domain; sequence ATILFATETG…AFCTWAVQTF (139 aa). FMN is bound by residues Thr-544, Glu-545, Thr-546, Lys-548, and Ser-549. Tyr-574 is subject to Phosphotyrosine. Positions 590, 591, 627, 632, 634, 660, and 664 each coordinate FMN. One can recognise an FAD-binding FR-type domain in the interval 729–969; it reads TDVFTMRLKS…VRSVNSFQLP (241 aa). NADP(+) is bound at residue Arg-749. Positions 771, 905, 907, 908, 923, and 925 each coordinate FAD. Thr-928 contributes to the NADP(+) binding site. FAD contacts are provided by Tyr-929, Val-942, Cys-943, and Ser-944. NADP(+)-binding residues include Thr-983, Arg-1016, Ser-1045, Arg-1046, Lys-1052, Tyr-1054, Gln-1056, and Asp-1089.

Belongs to the NOS family. Homodimer. Interacts with NHERF1. Interacts with GAPDH; induced by oxidatively-modified low-densitity lipoprotein (LDL(ox)). Interacts with S100A8 and S100A9 to form the iNOS-S100A8/9 transnitrosylase complex. Interacts with SPSB1, SPSB2 and SPSB4. Interacts with ELOC and CUL5 in the presence of SPSB1 or SPSB2 or SPSB4. Forms a complex with ASL, ASS1 and HSP90AA1; the complex regulates cell-autonomous L-arginine synthesis and citrulline recycling while channeling extracellular L-arginine to nitric oxide synthesis pathway. Requires heme b as cofactor. It depends on FAD as a cofactor. FMN serves as cofactor. (6R)-L-erythro-5,6,7,8-tetrahydrobiopterin is required as a cofactor. In terms of processing, polyubiquitinated; mediated by SPSB1, SPSB2 and SPSB4, leading to proteasomal degradation. As to expression, expressed in the lung and colon. Not detected in the heart, aorta, liver, kidney, and spleen.

The protein localises to the cytoplasm. It localises to the cytosol. The enzyme catalyses 2 L-arginine + 3 NADPH + 4 O2 + H(+) = 2 L-citrulline + 2 nitric oxide + 3 NADP(+) + 4 H2O. Its activity is regulated as follows. Regulated by calcium/calmodulin. In terms of biological role, produces nitric oxide (NO) which is a messenger molecule with diverse functions throughout the body. In macrophages, NO mediates tumoricidal and bactericidal actions. Also has nitrosylase activity and mediates cysteine S-nitrosylation of cytoplasmic target proteins such PTGS2/COX2. As component of the iNOS-S100A8/9 transnitrosylase complex involved in the selective inflammatory stimulus-dependent S-nitrosylation of GAPDH implicated in regulation of the GAIT complex activity and probably multiple targets including ANXA5, EZR, MSN and VIM. Involved in inflammation, enhances the synthesis of pro-inflammatory mediators such as IL6 and IL8. This chain is Nitric oxide synthase, inducible (NOS2), found in Cavia porcellus (Guinea pig).